The primary structure comprises 448 residues: uncharacterized protein (448 aa).

257–264 (GRNAQGKT) contacts ATP.

This is an uncharacterized protein from Methanocaldococcus jannaschii (strain ATCC 43067 / DSM 2661 / JAL-1 / JCM 10045 / NBRC 100440) (Methanococcus jannaschii).